Here is a 368-residue protein sequence, read N- to C-terminus: Glutamate 5-kinase (368 aa).

Residue lysine 9 coordinates ATP. 3 residues coordinate substrate: serine 49, aspartate 136, and asparagine 148. Residues 168 to 169 and 210 to 216 each bind ATP; these read TD and TGGMMTK. Residues 275–353 enclose the PUA domain; it reads AGIITIDNGA…ADIENVLGYE (79 aa).

It belongs to the glutamate 5-kinase family.

Its subcellular location is the cytoplasm. The catalysed reaction is L-glutamate + ATP = L-glutamyl 5-phosphate + ADP. It participates in amino-acid biosynthesis; L-proline biosynthesis; L-glutamate 5-semialdehyde from L-glutamate: step 1/2. In terms of biological role, catalyzes the transfer of a phosphate group to glutamate to form L-glutamate 5-phosphate. This Haemophilus influenzae (strain PittEE) protein is Glutamate 5-kinase.